The sequence spans 249 residues: 5-amino-6-(5-phospho-D-ribitylamino)uracil phosphatase YcsE (249 aa).

Asp16 acts as the Nucleophile in catalysis. Residue Asp16 participates in Mg(2+) binding. Met17 serves as a coordination point for phosphate. Mg(2+) is bound at residue Asp18. Residues 50 to 51 (TG) and Lys177 contribute to the phosphate site. The Mg(2+) site is built by Asp200 and Ser201. A phosphate-binding site is contributed by Asn203.

This sequence belongs to the HAD-like hydrolase superfamily. Cof family. It depends on Mg(2+) as a cofactor.

The enzyme catalyses 5-amino-6-(5-phospho-D-ribitylamino)uracil + H2O = 5-amino-6-(D-ribitylamino)uracil + phosphate. The protein operates within cofactor biosynthesis; riboflavin biosynthesis; 5-amino-6-(D-ribitylamino)uracil from GTP: step 4/4. Functionally, catalyzes the dephosphorylation of the riboflavin precursor 5-amino-6-(5-phospho-D-ribitylamino)uracil and of flavin mononucleotide (FMN) in vitro. To a lesser extent, may also catalyze the dephosphorylation of a broad range of substrates such as phosphorylated sugars and triphosphate nucleotides in vitro. This is 5-amino-6-(5-phospho-D-ribitylamino)uracil phosphatase YcsE (ycsE) from Bacillus subtilis (strain 168).